The following is a 677-amino-acid chain: UvrABC system protein B (677 aa).

Residues 24–412 (EGVLQGVPAQ…EGIVVEQVIR (389 aa)) enclose the Helicase ATP-binding domain. Residue 37–44 (GVTGSGKT) participates in ATP binding. Residues 90–113 (YYDYYQPEAYLPNSDTYIEKDLAI) carry the Beta-hairpin motif. The Helicase C-terminal domain occupies 429-591 (QIDDLMEEIQ…ITPQQIKKAR (163 aa)). A UVR domain is found at 636 to 671 (EKSIERTRKLMQEAAKKLEFIEAAQYRNELLKLEDL).

It belongs to the UvrB family. As to quaternary structure, forms a heterotetramer with UvrA during the search for lesions. Interacts with UvrC in an incision complex.

The protein localises to the cytoplasm. Its function is as follows. The UvrABC repair system catalyzes the recognition and processing of DNA lesions. A damage recognition complex composed of 2 UvrA and 2 UvrB subunits scans DNA for abnormalities. Upon binding of the UvrA(2)B(2) complex to a putative damaged site, the DNA wraps around one UvrB monomer. DNA wrap is dependent on ATP binding by UvrB and probably causes local melting of the DNA helix, facilitating insertion of UvrB beta-hairpin between the DNA strands. Then UvrB probes one DNA strand for the presence of a lesion. If a lesion is found the UvrA subunits dissociate and the UvrB-DNA preincision complex is formed. This complex is subsequently bound by UvrC and the second UvrB is released. If no lesion is found, the DNA wraps around the other UvrB subunit that will check the other stand for damage. This Bacteroides thetaiotaomicron (strain ATCC 29148 / DSM 2079 / JCM 5827 / CCUG 10774 / NCTC 10582 / VPI-5482 / E50) protein is UvrABC system protein B.